The sequence spans 257 residues: UPF0246 protein Ssed_1188 (257 aa).

It belongs to the UPF0246 family.

This is UPF0246 protein Ssed_1188 from Shewanella sediminis (strain HAW-EB3).